A 502-amino-acid chain; its full sequence is Ubiquitin-associated protein 1 (502 aa).

Residues 1 to 95 (MASKKLGTDV…AEAKVNSKSG (95 aa)) are interaction with ESCRT-I. Residues 17–63 (LDDVPFKIGDKFKTPAKVGLPIGFSLPDCLQVVREMQYDFSLEKKTI) enclose the UMA domain. Residues 80–100 (ERKAEEAEAKVNSKSGPEGDS) are compositionally biased toward basic and acidic residues. 2 disordered regions span residues 80–117 (ERKAEEAEAKVNSKSGPEGDSKVSFPKTHNTATMPPPI) and 135–156 (VSSSATKQKVLSPPHTKADFNP). Residues Ser-146, Ser-205, and Ser-289 each carry the phosphoserine modification. An interaction with PTPN23 region spans residues 260-290 (VSNIKSLSFPKLDSDDSNQKTVKLASTFHST). 2 consecutive UBA domains span residues 389 to 430 (SPSE…LFAH) and 451 to 498 (QCSE…LMAR).

Component of an ESCRT-I complex (endosomal sorting complex required for transport I) which consists of TSG101, VPS28, VPS37A and UBAP1 in a 1:1:1:1 stoichiometry. Interacts with PTPN23. Interacts (via UBA domains) with ubiquitinated proteins. Ubiquitous. Highly expressed in heart, liver, brain, kidney, spleen, skeletal muscle, stomach, testis and lung.

The protein localises to the cytoplasm. Its subcellular location is the cytosol. The protein resides in the endosome. Component of the ESCRT-I complex, a regulator of vesicular trafficking process. Binds to ubiquitinated cargo proteins and is required for the sorting of endocytic ubiquitinated cargos into multivesicular bodies (MVBs). Plays a role in the proteasomal degradation of ubiquitinated cell-surface proteins, such as EGFR and BST2. The protein is Ubiquitin-associated protein 1 of Mus musculus (Mouse).